Consider the following 893-residue polypeptide: 26S proteasome non-ATPase regulatory subunit 2 (893 aa).

Residues 1–59 (MPQKEVTIPVPAKGGSNKEEDKKDNKDTEEKNTTTNTTTKDNKKDKKKDKKEETLSPED) are disordered. 2 stretches are compositionally biased toward basic and acidic residues: residues 16 to 32 (SNKEEDKKDNKDTEEKN) and 40 to 59 (KDNKKDKKKDKKEETLSPED). PC repeat units lie at residues 412 to 445 (STVASTGMVVLWDIDGGLTKIDKFLYSQEKHCSN), 446 to 482 (GALMAIGMLTSGIRSEMDPALSLLAEHINSSNTGTRI), 483 to 517 (SAIFGLGLAYAGTQRQDLMSLLSPCLDDDKEKMEF), 522 to 555 (GLALGLIFIGSCDPELSTLFVQTLIQRGTAASES), 562 to 583 (LGLGLLYLGKQDAAELALETLK), 666 to 700 (AIPLALGLLSPSNPRIAIMDILSKLSHDNDPEVAQ), and 701 to 735 (GAILSLGLIGAGTNNARIGGMLRALAVFYGKDVHL).

The protein belongs to the proteasome subunit S2 family.

Its function is as follows. Acts as a regulatory subunit of the 26 proteasome which is involved in the ATP-dependent degradation of ubiquitinated proteins. The chain is 26S proteasome non-ATPase regulatory subunit 2 (psmD2) from Dictyostelium discoideum (Social amoeba).